Reading from the N-terminus, the 276-residue chain is DnaJ homolog subfamily C member 27-B (276 aa).

GTP contacts are provided by residues 23-30 (GNAEVGKS), 71-75 (DMAGH), and 137-140 (NKID). In terms of domain architecture, J spans 220 to 276 (DSWDMLGVKPGATRDEVNKAYRKLAVLLHPDKCVAPGSEDAFKAVVNARTALLKNIK).

The protein belongs to the small GTPase superfamily. Rab family.

The protein resides in the nucleus. Functionally, GTPase possibly involved in regulation of the MEK/ERK pathway. The polypeptide is DnaJ homolog subfamily C member 27-B (dnajc27-b) (Xenopus laevis (African clawed frog)).